Here is a 141-residue protein sequence, read N- to C-terminus: Large ribosomal subunit protein uL11 (141 aa).

Belongs to the universal ribosomal protein uL11 family. In terms of assembly, part of the ribosomal stalk of the 50S ribosomal subunit. Interacts with L10 and the large rRNA to form the base of the stalk. L10 forms an elongated spine to which L12 dimers bind in a sequential fashion forming a multimeric L10(L12)X complex. One or more lysine residues are methylated.

Its function is as follows. Forms part of the ribosomal stalk which helps the ribosome interact with GTP-bound translation factors. This is Large ribosomal subunit protein uL11 from Thermotoga petrophila (strain ATCC BAA-488 / DSM 13995 / JCM 10881 / RKU-1).